Reading from the N-terminus, the 404-residue chain is Cytochrome b (404 aa).

Helical transmembrane passes span 35 to 55 (FGSL…FLAM), 79 to 101 (WLLR…LHFF), 116 to 136 (VWCL…IGYV), and 182 to 202 (FFSL…LHLA). Heme b is bound by residues His85 and His99. Residues His186 and His200 each contribute to the heme b site. Position 205 (His205) interacts with a ubiquinone. Helical transmembrane passes span 228-248 (IYVK…IFVF), 292-312 (LGGV…PFIN), 324-344 (IHQK…WIGC), and 351-370 (YVTI…AITP).

Belongs to the cytochrome b family. In terms of assembly, the main subunits of complex b-c1 are: cytochrome b, cytochrome c1 and the Rieske protein. The cofactor is heme b.

The protein resides in the mitochondrion inner membrane. In terms of biological role, component of the ubiquinol-cytochrome c reductase complex (complex III or cytochrome b-c1 complex) that is part of the mitochondrial respiratory chain. The b-c1 complex mediates electron transfer from ubiquinol to cytochrome c. Contributes to the generation of a proton gradient across the mitochondrial membrane that is then used for ATP synthesis. The protein is Cytochrome b (MT-CYB) of Marchantia polymorpha (Common liverwort).